Here is a 218-residue protein sequence, read N- to C-terminus: Glutathione S-transferase A (218 aa).

S1 carries the post-translational modification N-acetylserine. The GST N-terminal domain occupies 2 to 82; sequence GKPVLHYFNV…YIATKYNLYG (81 aa). K3 is subject to N6-succinyllysine. Glutathione contacts are provided by residues Y8, K44, 53–54, and 66–67; these read QV and QS. Positions 84–206 constitute a GST C-terminal domain; that stretch reads DTKERLLIDM…LQPGSQRKPF (123 aa).

This sequence belongs to the GST superfamily. Alpha family. As to quaternary structure, homodimer or heterodimer of GSTA1 and GSTA2.

The protein localises to the cytoplasm. The catalysed reaction is RX + glutathione = an S-substituted glutathione + a halide anion + H(+). The enzyme catalyses prostaglandin A2 + glutathione = prostaglandin A2-S-(R)-glutathione. It carries out the reaction prostaglandin J2 + glutathione = prostaglandin J2-S-(R)-glutathione. It catalyses the reaction (13S)-hydroperoxy-(9Z,11E)-octadecadienoate + 2 glutathione = (13S)-hydroxy-(9Z,11E)-octadecadienoate + glutathione disulfide + H2O. The catalysed reaction is androst-5-ene-3,17-dione = androst-4-ene-3,17-dione. Glutathione S-transferase that catalyzes the nucleophilic attack of the sulfur atom of glutathione on the electrophilic groups of a wide range of exogenous and endogenous compounds. Involved in the formation of glutathione conjugates of both prostaglandin A2 (PGA2) and prostaglandin J2 (PGJ2). It also catalyzes the isomerization of D5-androstene-3,17-dione (AD) into D4-androstene-3,17-dione and may therefore play an important role in hormone biosynthesis. Through its glutathione-dependent peroxidase activity toward the fatty acid hydroperoxide (13S)-hydroperoxy-(9Z,11E)-octadecadienoate/13-HPODE it is also involved in the metabolism of oxidized linoleic acid. The sequence is that of Glutathione S-transferase A from Cavia porcellus (Guinea pig).